Consider the following 517-residue polypeptide: Cytochrome P450 monooxygenase penP (517 aa).

The helical transmembrane segment at 17-37 (GEATVIWILVALVLVAYLILP) threads the bilayer. Cysteine 456 is a binding site for heme. An N-linked (GlcNAc...) asparagine glycan is attached at asparagine 501.

The protein belongs to the cytochrome P450 family. Requires heme as cofactor.

Its subcellular location is the membrane. Its pathway is secondary metabolite biosynthesis. Functionally, cytochrome P450 monooxygenase; part of the gene cluster that mediates the biosynthesis of the indole diterpenes penitrems. The geranylgeranyl diphosphate (GGPP) synthase penG catalyzes the first step in penitrem biosynthesis via conversion of farnesyl pyrophosphate and isopentyl pyrophosphate into geranylgeranyl pyrophosphate (GGPP). Condensation of indole-3-glycerol phosphate with GGPP by the prenyl transferase penC then forms 3-geranylgeranylindole (3-GGI). Epoxidation by the FAD-dependent monooxygenase penM leads to a epoxidized-GGI that is substrate of the terpene cyclase penB for cyclization to yield paspaline. Paspaline is subsequently converted to 13-desoxypaxilline by the cytochrome P450 monooxygenase penP, the latter being then converted to paxilline by the cytochrome P450 monooxygenase penQ. Paxilline is converted to beta-paxitriol via C-10 ketoreduction by the short-chain dehydrogenase PC-15 which can be monoprenylated at the C-20 by the indole diterpene prenyltransferase penD. A two-step elimination (acetylation and elimination) process performed by the O-acetyltransferase PC-16 and the P.simplicissimum ptmI-ortholog not yet identified in P.crustosum, leads to the production of the prenylated form of penijanthine. The FAD-linked oxidoreductase ptmO then converts the prenylated form of penijanthine into PC-M5 which is in turn transformed into PC-M4 by the aromatic dimethylallyltransferase PC-22. A series of oxidation steps involving 4 cytochrome P450 monooxygenases (PC-21, PC-05, PC-23, PC-20) and a FAD-dependent monooxygenase (PC-14) are required for the transformation of PC-M4 to penitrems A and E. Synthesis of these final products is proposed to proceed via penitrems D and C (PC-21, PC-05, PC-14) and penitrems B and F (PC-21, PC-05, PC-14, PC-23). The protein is Cytochrome P450 monooxygenase penP of Penicillium crustosum (Blue mold fungus).